The following is a 99-amino-acid chain: Protein S100-Z (99 aa).

EF-hand domains are found at residues 13-48 and 50-85; these read IRIF…FLSC and KETQ…LTVA. Ca(2+)-binding residues include serine 20, glutamate 23, lysine 28, glutamate 33, aspartate 63, asparagine 65, aspartate 67, glutamate 69, and glutamate 74.

It belongs to the S-100 family. As to quaternary structure, homodimer. Interacts with S100P. In terms of tissue distribution, highest level of expression in spleen and leukocytes.

The sequence is that of Protein S100-Z from Homo sapiens (Human).